The sequence spans 124 residues: V-type proton ATPase subunit F (124 aa).

Belongs to the V-ATPase F subunit family. In terms of assembly, V-ATPase is a heteromultimeric enzyme composed of a peripheral catalytic V1 complex (components A to H) attached to an integral membrane V0 proton pore complex (components: a, c, c', c'', d, e, f and VOA1).

The protein localises to the vacuole membrane. Functionally, subunit of the V1 complex of vacuolar(H+)-ATPase (V-ATPase), a multisubunit enzyme composed of a peripheral complex (V1) that hydrolyzes ATP and a membrane integral complex (V0) that translocates protons. V-ATPase is responsible for acidifying and maintaining the pH of intracellular compartments. The protein is V-type proton ATPase subunit F (vma7) of Neosartorya fischeri (strain ATCC 1020 / DSM 3700 / CBS 544.65 / FGSC A1164 / JCM 1740 / NRRL 181 / WB 181) (Aspergillus fischerianus).